We begin with the raw amino-acid sequence, 410 residues long: Multidrug resistance protein MdtM (410 aa).

The Cytoplasmic segment spans residues 1-11 (MPRFFARHAAT). A helical transmembrane segment spans residues 12–32 (LFFPMALILYDFAAYLSTDLI). The Periplasmic segment spans residues 33–48 (QPGIINVVRDFNADVS). Residues 49–69 (LAPAAVSLYLAGGMALQWLLG) form a helical membrane-spanning segment. Topologically, residues 70 to 78 (PLSDRIGRK) are cytoplasmic. The chain crosses the membrane as a helical span at residues 79 to 99 (PVLITGALIFTLACAATMFTT). At 100–103 (SMTQ) the chain is on the periplasmic side. The chain crosses the membrane as a helical span at residues 104–124 (FLIARAIQGTSICFIATVGYV). Topologically, residues 125-140 (TVQEAFGQTKGIKLMA) are cytoplasmic. Residues 141 to 161 (IITSIVLIAPIIGPLSGAALM) traverse the membrane as a helical segment. Over 162–167 (HFVHWK) the chain is Periplasmic. A helical membrane pass occupies residues 168–188 (VLFAIIAVMGFISFVGLLLAM). Residues 189-216 (PETVKRGAVPFSAKSVLRDFRNVFCNRL) lie on the Cytoplasmic side of the membrane. A helical membrane pass occupies residues 217-237 (FLFGAATISLSYIPMMSWVAV). At 238–251 (SPVILIDAGGLTTS) the chain is on the periplasmic side. Residues 252–272 (QFAWTQVPVFGAVIVANAIVA) traverse the membrane as a helical segment. Residues 273–282 (RFVKDPTEPR) are Cytoplasmic-facing. A helical membrane pass occupies residues 283 to 303 (FIWRAVPIQLVGLALLIIGNL). The Periplasmic portion of the chain corresponds to 304–307 (LSPH). The helical transmembrane segment at 308–328 (VWLWSVLGTSLYAFGIGLIFP) threads the bilayer. Over 329–348 (TLFRFTLFSNNLPKGTVSAS) the chain is Cytoplasmic. A helical transmembrane segment spans residues 349 to 369 (LNMVILMVMSVSVEIGRWLWF). The Periplasmic portion of the chain corresponds to 370–373 (NGGR). A helical transmembrane segment spans residues 374-394 (LPFHLLAVVAGVIVVFTLAGL). Over 395 to 410 (LNRVRQHQAAELAEEQ) the chain is Cytoplasmic.

Belongs to the major facilitator superfamily.

The protein localises to the cell inner membrane. Its function is as follows. Proton-dependent efflux pump. Confers resistance to a broad spectrum of chemically unrelated substrates. This is Multidrug resistance protein MdtM (mdtM) from Escherichia coli O157:H7.